The following is a 185-amino-acid chain: Ribosome-recycling factor (185 aa).

This sequence belongs to the RRF family.

It is found in the cytoplasm. Responsible for the release of ribosomes from messenger RNA at the termination of protein biosynthesis. May increase the efficiency of translation by recycling ribosomes from one round of translation to another. In Baumannia cicadellinicola subsp. Homalodisca coagulata, this protein is Ribosome-recycling factor.